The following is a 135-amino-acid chain: Ribonuclease P protein component (135 aa).

It belongs to the RnpA family. As to quaternary structure, consists of a catalytic RNA component (M1 or rnpB) and a protein subunit.

It carries out the reaction Endonucleolytic cleavage of RNA, removing 5'-extranucleotides from tRNA precursor.. Its function is as follows. RNaseP catalyzes the removal of the 5'-leader sequence from pre-tRNA to produce the mature 5'-terminus. It can also cleave other RNA substrates such as 4.5S RNA. The protein component plays an auxiliary but essential role in vivo by binding to the 5'-leader sequence and broadening the substrate specificity of the ribozyme. This is Ribonuclease P protein component from Xylella fastidiosa (strain Temecula1 / ATCC 700964).